Here is a 63-residue protein sequence, read N- to C-terminus: uncharacterized protein (63 aa).

This is an uncharacterized protein from Rickettsia conorii (strain ATCC VR-613 / Malish 7).